The chain runs to 206 residues: Ribosomal RNA small subunit methyltransferase G (206 aa).

S-adenosyl-L-methionine is bound by residues glycine 74, leucine 79, 125–126 (VE), and arginine 140.

Belongs to the methyltransferase superfamily. RNA methyltransferase RsmG family.

It localises to the cytoplasm. It catalyses the reaction guanosine(527) in 16S rRNA + S-adenosyl-L-methionine = N(7)-methylguanosine(527) in 16S rRNA + S-adenosyl-L-homocysteine. Functionally, specifically methylates the N7 position of guanine in position 527 of 16S rRNA. This is Ribosomal RNA small subunit methyltransferase G from Shewanella amazonensis (strain ATCC BAA-1098 / SB2B).